The following is a 1958-amino-acid chain: Callose synthase 7 (1958 aa).

The interval 1 to 29 (MASTSSGGRGEDGRPPQMQPVRSMSRKMT) is disordered. Topologically, residues 1 to 504 (MASTSSGGRG…LYRSFDRMWM (504 aa)) are cytoplasmic. Residues 505–525 (FLVLSLQTMIIVAWHPSGSIL) traverse the membrane as a helical segment. Residues 526 to 535 (AIFTEDVFRN) are Extracellular-facing. Residues 536–556 (VLTIFITSAFLNLLQATLDLV) traverse the membrane as a helical segment. The Cytoplasmic portion of the chain corresponds to 557 to 569 (LSFGAWKSLKFSQ). Residues 570–590 (IMRYITKFLMAAMWAIMLPIT) form a helical membrane-spanning segment. Residues 591–620 (YSKSVQNPTGLIKFFSSWVGSWLHRSLYDY) are Extracellular-facing. The chain crosses the membrane as a helical span at residues 621–641 (AIALYVLPNILAAVFFLLPPL). The Cytoplasmic segment spans residues 642–673 (RRIMERSNMRIVTLIMWWAQPKLYIGRGMHEE). The helical transmembrane segment at 674–694 (MFALFKYTFFWVMLLLSKLAF) threads the bilayer. Residues 695–730 (SYYVEILPLVNPTKLIWDMHVVNYEWHEFFPNATHN) lie on the Extracellular side of the membrane. Residues 731-751 (IGVIIAIWGPIVLVYFMDTQI) form a helical membrane-spanning segment. Residues 752–1496 (WYAIFSTLFG…FDFYRMLSFY (745 aa)) lie on the Cytoplasmic side of the membrane. Residues 1497-1517 (FTTVGFYFSSMITVLTVYVFL) traverse the membrane as a helical segment. Residues 1518–1547 (YGRLYLVLSGLEKNILQSASVHESNALEQA) lie on the Extracellular side of the membrane. The helical transmembrane segment at 1548-1568 (LAAQSVFQLGFLMVLPMVMEI) threads the bilayer. Residues 1569 to 1576 (GLEKGFRT) are Cytoplasmic-facing. A helical transmembrane segment spans residues 1577–1597 (ALGDFIIMQLQLASVFFTFQL). Topologically, residues 1598-1640 (GTKAHYFGRTILHGGSKYRATGRGFVVFHAKFAENYRLYSRSH) are extracellular. Residues 1641-1661 (FVKGLELVILLVVYQVYGTSY) traverse the membrane as a helical segment. Residues 1662 to 1667 (RSSSTY) lie on the Cytoplasmic side of the membrane. The chain crosses the membrane as a helical span at residues 1668-1688 (MYITFSMWFLVTSWLFAPFIF). Topologically, residues 1689–1742 (NPSGFEWQKTVDDWTDWKRWMGNRGGIGIVLDKSWESWWDIEQEHLKHTNLRGR) are extracellular. A helical transmembrane segment spans residues 1743–1763 (VLEILLALRFLLYQYGIVYHL). Topologically, residues 1764–1771 (NIARRHTT) are cytoplasmic. Residues 1772-1792 (FLVYGLSWAILLSVLLVLKMV) form a helical membrane-spanning segment. Topologically, residues 1793-1812 (SMGRRKFGTDFQVMFRILKA) are extracellular. A helical membrane pass occupies residues 1813–1833 (LLFLGFLSVMTVLFVVCGLTI). Residues 1834–1835 (SD) lie on the Cytoplasmic side of the membrane. Residues 1836-1856 (LFASILAFLPTGWAILLIGQA) form a helical membrane-spanning segment. Residues 1857–1878 (LRSVFKGLGFWDSVKELGRAYE) are Extracellular-facing. Residues 1879-1899 (YIMGLVIFTPIAVLSWFPFVS) traverse the membrane as a helical segment. Topologically, residues 1900–1958 (EFQTRLLFNQAFSRGLQISMILAGKKDKETPSTKYLGHTEESFGLEHDTNTFNHYYLWT) are cytoplasmic.

This sequence belongs to the glycosyltransferase 48 family.

It is found in the cell membrane. The enzyme catalyses [(1-&gt;3)-beta-D-glucosyl](n) + UDP-alpha-D-glucose = [(1-&gt;3)-beta-D-glucosyl](n+1) + UDP + H(+). Functionally, involved in callose synthesis at the forming cell plate during cytokinesis. During plant growth and development, callose is found as a transitory component of the cell plate in dividing cells, is a major component of pollen mother cell walls and pollen tubes, and is found as a structural component of plasmodesmatal canals. The sequence is that of Callose synthase 7 (CALS7) from Arabidopsis thaliana (Mouse-ear cress).